The primary structure comprises 76 residues: Pigment-dispersing hormone A peptides (76 aa).

An N-terminal signal peptide occupies residues 1 to 20; the sequence is MRSAMVVLVLVAMVAVFTRA. An Alanine amide modification is found at alanine 73.

Belongs to the arthropod PDH family. As to expression, optical ganglia of the eyestalk.

It localises to the secreted. Its function is as follows. The pigment-dispersing hormone causes the migration of the distal retinal pigment into the proximal end of the pigment chromatophore cells and thus decreases the amount of light entering the retinulas. May also function as a neurotransmitter and/or neuromodulator. The protein is Pigment-dispersing hormone A peptides of Faxonius limosus (Spinycheek crayfish).